Reading from the N-terminus, the 244-residue chain is Ribonuclease 3 (244 aa).

One can recognise an RNase III domain in the interval 7-134 (FEEVEKTLNI…IIAAIYIDSG (128 aa)). A Mg(2+)-binding site is contributed by E47. Residue D51 is part of the active site. Positions 120 and 123 each coordinate Mg(2+). The active site involves E123. Residues 161–230 (DYKTNLQEIV…AQDALKKLKS (70 aa)) form the DRBM domain.

It belongs to the ribonuclease III family. In terms of assembly, homodimer. Mg(2+) is required as a cofactor.

The protein localises to the cytoplasm. It catalyses the reaction Endonucleolytic cleavage to 5'-phosphomonoester.. In terms of biological role, digests double-stranded RNA. Involved in the processing of primary rRNA transcript to yield the immediate precursors to the large and small rRNAs (23S and 16S). Processes some mRNAs, and tRNAs when they are encoded in the rRNA operon. Processes pre-crRNA and tracrRNA of type II CRISPR loci if present in the organism. This Clostridium kluyveri (strain NBRC 12016) protein is Ribonuclease 3.